Reading from the N-terminus, the 1020-residue chain is Glucan endo-1,3-beta-D-glucosidase (1020 aa).

An N-terminal signal peptide occupies residues 1-25 (MKGKNVQLLFALVVIILLFPTGASA). Residues 28 to 251 (HAVSVGKGSY…ADYIAIAKLP (224 aa)) form a beta-sandwich subdomain region. Residues 28–722 (HAVSVGKGSY…HWIHNLAELG (695 aa)) enclose the GH81 domain. Positions 252 to 350 (EKDGNMLAKF…EGKRFTTELT (99 aa)) are alpha/beta subdomain. The (alpha/beta)6 barrel subdomain stretch occupies residues 360–722 (DLGDYDRERL…HWIHNLAELG (363 aa)). Tyrosine 387, lysine 391, histidine 458, aspartate 466, histidine 470, aspartate 530, asparagine 540, glutamate 542, glutamate 546, glutamate 699, and arginine 704 together coordinate (1,3-beta-D-glucosyl)n. Aspartate 466 is an active-site residue. Active-site residues include glutamate 542 and glutamate 546. The interval 771–790 (HSFNIGNGDGPTNPDPSEPD) is disordered. The CBM6 domain occupies 796–922 (ERIQAEAYDA…LMNVNWFVFR (127 aa)). (1,3-beta-D-glucosyl)n-binding residues include glutamate 812, tryptophan 825, aspartate 853, asparagine 878, aspartate 912, and asparagine 915. Residues 928-1020 (NGDSHTHPDY…YTTEWFTYSR (93 aa)) form the CBM56 domain.

It belongs to the glycosyl hydrolase 81 family.

It is found in the secreted. It catalyses the reaction Hydrolysis of (1-&gt;3)-beta-D-glucosidic linkages in (1-&gt;3)-beta-D-glucans.. In terms of biological role, cleaves internal linkages in 1,3-beta-glucan. May contribute to plant biomass degradation. This Halalkalibacterium halodurans (strain ATCC BAA-125 / DSM 18197 / FERM 7344 / JCM 9153 / C-125) (Bacillus halodurans) protein is Glucan endo-1,3-beta-D-glucosidase.